A 152-amino-acid polypeptide reads, in one-letter code: D-aminoacyl-tRNA deacylase (152 aa).

The short motif at 142–143 is the Gly-cisPro motif, important for rejection of L-amino acids element; it reads GP.

The protein belongs to the DTD family. In terms of assembly, homodimer.

The protein resides in the cytoplasm. The catalysed reaction is glycyl-tRNA(Ala) + H2O = tRNA(Ala) + glycine + H(+). It catalyses the reaction a D-aminoacyl-tRNA + H2O = a tRNA + a D-alpha-amino acid + H(+). In terms of biological role, an aminoacyl-tRNA editing enzyme that deacylates mischarged D-aminoacyl-tRNAs. Also deacylates mischarged glycyl-tRNA(Ala), protecting cells against glycine mischarging by AlaRS. Acts via tRNA-based rather than protein-based catalysis; rejects L-amino acids rather than detecting D-amino acids in the active site. By recycling D-aminoacyl-tRNA to D-amino acids and free tRNA molecules, this enzyme counteracts the toxicity associated with the formation of D-aminoacyl-tRNA entities in vivo and helps enforce protein L-homochirality. In Paraburkholderia phytofirmans (strain DSM 17436 / LMG 22146 / PsJN) (Burkholderia phytofirmans), this protein is D-aminoacyl-tRNA deacylase.